A 370-amino-acid polypeptide reads, in one-letter code: UDP-N-acetylglucosamine--N-acetylmuramyl-(pentapeptide) pyrophosphoryl-undecaprenol N-acetylglucosamine transferase (370 aa).

UDP-N-acetyl-alpha-D-glucosamine contacts are provided by residues 10-12, asparagine 124, serine 196, isoleucine 253, and glutamine 298; that span reads TGG.

Belongs to the glycosyltransferase 28 family. MurG subfamily.

It is found in the cell membrane. The catalysed reaction is Mur2Ac(oyl-L-Ala-gamma-D-Glu-L-Lys-D-Ala-D-Ala)-di-trans,octa-cis-undecaprenyl diphosphate + UDP-N-acetyl-alpha-D-glucosamine = beta-D-GlcNAc-(1-&gt;4)-Mur2Ac(oyl-L-Ala-gamma-D-Glu-L-Lys-D-Ala-D-Ala)-di-trans,octa-cis-undecaprenyl diphosphate + UDP + H(+). The protein operates within cell wall biogenesis; peptidoglycan biosynthesis. Cell wall formation. Catalyzes the transfer of a GlcNAc subunit on undecaprenyl-pyrophosphoryl-MurNAc-pentapeptide (lipid intermediate I) to form undecaprenyl-pyrophosphoryl-MurNAc-(pentapeptide)GlcNAc (lipid intermediate II). The polypeptide is UDP-N-acetylglucosamine--N-acetylmuramyl-(pentapeptide) pyrophosphoryl-undecaprenol N-acetylglucosamine transferase (Limosilactobacillus reuteri subsp. reuteri (strain JCM 1112) (Lactobacillus reuteri)).